The following is a 447-amino-acid chain: MREIVHIQAGQCGNQIGSKFWEVISEEHGIDPSGVYQGKLSTQLERSYVYFNEASSGKYVPRAVLLDLEPGTMDSVRSGPYGSLFRPDNYVFGQSGAGNNWAKGHYTEGAELVDTVLDVIRKECEGCECIQGFQMTHSLGGGTGAGMGTLLISKYREEYPDRIMTTFSVMPSPKVSDTVVEPYNATLSIHQLVENTDETFCIDNEALYDISLRTLKLPNPTYGDLNHLVSATMSGVTTCLRFPGQLNADLRKLAVNMVPFPRLHFFMPGFAPLTSRGSQDYRMHSVSDLTQQLFDAKNMMTACDPRHGRYLTVAAVFRGKMSMKEVDEQMFSIQNKMSPYFVEWIPNNVKTAVCDIPPTGLEMSATFIGNSTAIQEIFKRISEQFTAMFRRKAFLHWYTGEGMDEMEFTEAESNMNDLVSEYQQYQEARSTDSDEYDNEEYYNQQEE.

Positions 11, 69, 138, 142, 143, 144, 204, and 226 each coordinate GTP. Glu-69 is a Mg(2+) binding site. A disordered region spans residues 424–447 (QYQEARSTDSDEYDNEEYYNQQEE). A compositionally biased stretch (acidic residues) spans 433-447 (SDEYDNEEYYNQQEE).

Belongs to the tubulin family. Dimer of alpha and beta chains. A typical microtubule is a hollow water-filled tube with an outer diameter of 25 nm and an inner diameter of 15 nM. Alpha-beta heterodimers associate head-to-tail to form protofilaments running lengthwise along the microtubule wall with the beta-tubulin subunit facing the microtubule plus end conferring a structural polarity. Microtubules usually have 13 protofilaments but different protofilament numbers can be found in some organisms and specialized cells. The cofactor is Mg(2+). Lens specific.

It localises to the cytoplasm. It is found in the cytoskeleton. Functionally, tubulin is the major constituent of microtubules, a cylinder consisting of laterally associated linear protofilaments composed of alpha- and beta-tubulin heterodimers. Microtubules grow by the addition of GTP-tubulin dimers to the microtubule end, where a stabilizing cap forms. Below the cap, tubulin dimers are in GDP-bound state, owing to GTPase activity of alpha-tubulin. This is Tubulin beta chain from Enteroctopus dofleini (North Pacific giant octopus).